The primary structure comprises 549 residues: Cytoplasmic trehalase (549 aa).

Substrate-binding positions include Arg168, 175-176, Asn212, 221-223, 292-294, and Gly324; these read WD, RSQ, and RDE. Residues Asp326 and Glu509 each act as proton donor/acceptor in the active site. Glu525 provides a ligand contact to substrate.

It belongs to the glycosyl hydrolase 37 family. In terms of assembly, monomer.

The protein resides in the cytoplasm. The enzyme catalyses alpha,alpha-trehalose + H2O = alpha-D-glucose + beta-D-glucose. It participates in glycan degradation; trehalose degradation; D-glucose from alpha,alpha-trehalose: step 1/1. Hydrolyzes trehalose to glucose. Could be involved, in cells returning to low osmolarity conditions, in the utilization of the accumulated cytoplasmic trehalose, which was synthesized in response to high osmolarity. The sequence is that of Cytoplasmic trehalase from Escherichia fergusonii (strain ATCC 35469 / DSM 13698 / CCUG 18766 / IAM 14443 / JCM 21226 / LMG 7866 / NBRC 102419 / NCTC 12128 / CDC 0568-73).